The chain runs to 838 residues: G-protein coupled receptor-associated sorting protein 2 (838 aa).

Disordered regions lie at residues 1–121 (MTGA…PGAR), 218–293 (ASNE…NPFS), and 531–552 (LELS…PSPE). The span at 13 to 31 (KPEKKAGEEVVAGPEREND) shows a compositional bias: basic and acidic residues. Residues 220–235 (NESGFWSADETSTASS) show a composition bias toward polar residues. Residues 255 to 271 (RSRHRAKHQTNPRSRPR) show a composition bias toward basic residues. Serine 282 and serine 284 each carry phosphoserine. A compositionally biased stretch (polar residues) spans 542-552 (SLLQPDQPSPE).

It belongs to the GPRASP family. In terms of assembly, interacts with cytoplasmic tails of a variety of G protein-coupled receptors such as muscarinic acetylcholine receptor M1/CHRM1 and calcitonin receptor/CALCR.

May play a role in regulation of a variety of G-protein coupled receptors. This is G-protein coupled receptor-associated sorting protein 2 (GPRASP2) from Pongo abelii (Sumatran orangutan).